Reading from the N-terminus, the 122-residue chain is Photosystem II extrinsic protein U (122 aa).

A signal peptide spans 1 to 30 (MRWLLSILVRVVLVLCLCFAPLGIPVVARA).

Belongs to the PsbU family. PSII is composed of 1 copy each of membrane proteins PsbA, PsbB, PsbC, PsbD, PsbE, PsbF, PsbH, PsbI, PsbJ, PsbK, PsbL, PsbM, PsbT, PsbX, PsbY, PsbZ, Psb30/Ycf12, peripheral proteins PsbO, CyanoQ (PsbQ), PsbU, PsbV and a large number of cofactors. It forms dimeric complexes.

It localises to the cellular thylakoid membrane. In terms of biological role, one of the extrinsic, lumenal subunits of photosystem II (PSII). PSII is a light-driven water plastoquinone oxidoreductase, using light energy to abstract electrons from H(2)O, generating a proton gradient subsequently used for ATP formation. The extrinsic proteins stabilize the structure of photosystem II oxygen-evolving complex (OEC), the ion environment of oxygen evolution and protect the OEC against heat-induced inactivation. This Synechococcus sp. (strain JA-2-3B'a(2-13)) (Cyanobacteria bacterium Yellowstone B-Prime) protein is Photosystem II extrinsic protein U.